Here is an 846-residue protein sequence, read N- to C-terminus: Translation initiation factor IF-2 (846 aa).

A disordered region spans residues tyrosine 198–lysine 219. The span at serine 207 to lysine 219 shows a compositional bias: basic residues. In terms of domain architecture, tr-type G spans serine 345–glutamate 512. Residues glycine 354–threonine 361 are G1. Glycine 354–threonine 361 lines the GTP pocket. The G2 stretch occupies residues glycine 379–histidine 383. A G3 region spans residues aspartate 400–glycine 403. GTP contacts are provided by residues aspartate 400–histidine 404 and asparagine 454–aspartate 457. The segment at asparagine 454–aspartate 457 is G4. The tract at residues serine 490–lysine 492 is G5.

The protein belongs to the TRAFAC class translation factor GTPase superfamily. Classic translation factor GTPase family. IF-2 subfamily.

It localises to the cytoplasm. Its function is as follows. One of the essential components for the initiation of protein synthesis. Protects formylmethionyl-tRNA from spontaneous hydrolysis and promotes its binding to the 30S ribosomal subunits. Also involved in the hydrolysis of GTP during the formation of the 70S ribosomal complex. The polypeptide is Translation initiation factor IF-2 (Francisella tularensis subsp. novicida (strain U112)).